A 265-amino-acid chain; its full sequence is Uronate dehydrogenase (265 aa).

NAD(+) contacts are provided by residues 12–13 (QL), 32–34 (DLS), 49–50 (DL), and 69–73 (LGGIS). Residues Ser-73 and 109 to 111 (SNH) each bind substrate. Catalysis depends on Tyr-134, which acts as the Proton acceptor. An NAD(+)-binding site is contributed by Lys-138. Ser-163 contributes to the substrate binding site. Cys-164 contacts NAD(+). Residue Arg-172 participates in substrate binding.

Belongs to the NAD(P)-dependent epimerase/dehydratase family. In terms of assembly, homohexamer.

It carries out the reaction beta-D-galacturonate + NAD(+) = D-galactaro-1,5-lactone + NADH + H(+). The enzyme catalyses beta-D-glucuronate + NAD(+) = D-glucaro-1,5-lactone + NADH + H(+). It participates in carbohydrate acid metabolism; D-galacturonate degradation via prokaryotic oxidative pathway. In terms of biological role, catalyzes the oxidation of D-galacturonate and D-glucuronate to galactarate and D-glucarate, respectively. In fact, in water solution the substrate D-galacturonate is predominantly in pyranosic form whose beta anomer is converted by the enzyme to D-galactaro-1,5-lactone; in solution, this reaction product rearranges to the more stable D-galactaro-1,4-lactone. Makes part of the oxidative degradation pathway of D-galacturonate, which allows A.tumefaciens to utilize D-galacturonate as a sole carbon source. Cannot use NADP(+) instead of NAD(+) as cosubstrate. Is not active on D-galactose, D-glucose, D-galactonate and D-gluconate. This is Uronate dehydrogenase (udh) from Agrobacterium fabrum (strain C58 / ATCC 33970) (Agrobacterium tumefaciens (strain C58)).